Here is a 250-residue protein sequence, read N- to C-terminus: 5-oxoprolinase subunit A (250 aa).

It belongs to the LamB/PxpA family. In terms of assembly, forms a complex composed of PxpA, PxpB and PxpC.

The enzyme catalyses 5-oxo-L-proline + ATP + 2 H2O = L-glutamate + ADP + phosphate + H(+). Its function is as follows. Catalyzes the cleavage of 5-oxoproline to form L-glutamate coupled to the hydrolysis of ATP to ADP and inorganic phosphate. This is 5-oxoprolinase subunit A from Thermus thermophilus (strain ATCC BAA-163 / DSM 7039 / HB27).